A 321-amino-acid chain; its full sequence is Urease accessory protein UreD (321 aa).

Belongs to the UreD family. As to quaternary structure, ureD, UreF and UreG form a complex that acts as a GTP-hydrolysis-dependent molecular chaperone, activating the urease apoprotein by helping to assemble the nickel containing metallocenter of UreC. The UreE protein probably delivers the nickel.

Its subcellular location is the cytoplasm. Its function is as follows. Required for maturation of urease via the functional incorporation of the urease nickel metallocenter. This Photorhabdus laumondii subsp. laumondii (strain DSM 15139 / CIP 105565 / TT01) (Photorhabdus luminescens subsp. laumondii) protein is Urease accessory protein UreD.